A 366-amino-acid chain; its full sequence is Chorismate synthase (366 aa).

Arginine 48 contributes to the NADP(+) binding site. Residues 125–127 (RSS), 241–242 (NA), glycine 285, 300–304 (KPTSS), and arginine 326 each bind FMN.

It belongs to the chorismate synthase family. As to quaternary structure, homotetramer. FMNH2 is required as a cofactor.

The catalysed reaction is 5-O-(1-carboxyvinyl)-3-phosphoshikimate = chorismate + phosphate. The protein operates within metabolic intermediate biosynthesis; chorismate biosynthesis; chorismate from D-erythrose 4-phosphate and phosphoenolpyruvate: step 7/7. Its function is as follows. Catalyzes the anti-1,4-elimination of the C-3 phosphate and the C-6 proR hydrogen from 5-enolpyruvylshikimate-3-phosphate (EPSP) to yield chorismate, which is the branch point compound that serves as the starting substrate for the three terminal pathways of aromatic amino acid biosynthesis. This reaction introduces a second double bond into the aromatic ring system. The protein is Chorismate synthase of Ruegeria pomeroyi (strain ATCC 700808 / DSM 15171 / DSS-3) (Silicibacter pomeroyi).